A 507-amino-acid chain; its full sequence is Beta-Ala-His dipeptidase (507 aa).

An N-terminal signal peptide occupies residues 1–26 (MDPKLGRMAASLLAVLLLLLERGMFS). His132 serves as a coordination point for Zn(2+). The active site involves Asp134. A Zn(2+)-binding site is contributed by Asp165. Glu199 functions as the Proton acceptor in the catalytic mechanism. Residue Glu200 participates in Zn(2+) binding. Residue Ser219 is modified to Phosphoserine. Asp228 contributes to the Zn(2+) binding site. 2 N-linked (GlcNAc...) asparagine glycosylation sites follow: Asn322 and Asn382. Position 478 (His478) interacts with Zn(2+).

It belongs to the peptidase M20A family. Homodimer. Zn(2+) serves as cofactor. As to expression, found in serum and adult nervous central system. Absent in serum from patients with homocarnosinosis.

It is found in the secreted. The catalysed reaction is Preferential hydrolysis of the beta-Ala-|-His dipeptide (carnosine), and also anserine, Xaa-|-His dipeptides and other dipeptides including homocarnosine.. The enzyme catalyses carnosine + H2O = beta-alanine + L-histidine. It carries out the reaction anserine + H2O = N(pros)-methyl-L-histidine + beta-alanine. It catalyses the reaction L-alanyl-L-histidine + H2O = L-histidine + L-alanine. The catalysed reaction is glycyl-L-histidine + H2O = L-histidine + glycine. The enzyme catalyses L-homocarnosine + H2O = 4-aminobutanoate + L-histidine. Activated by cadmium ions. Inhibited by the metal chelator 1,10-o-phenantrolin. The inhibitory concentration 50% (IC(50)) is 5 uM. In terms of biological role, catalyzes the peptide bond hydrolysis in Xaa-His dipeptides, displaying the highest activity toward carnosine (beta-alanyl-L-histidine) and anserine (beta-alanyl-3-methyl-histidine). This is Beta-Ala-His dipeptidase from Homo sapiens (Human).